A 1234-amino-acid chain; its full sequence is Anion exchange protein 2 (1234 aa).

A disordered region spans residues 1-239 (MSSAPRRPAS…YNLQERRRIG (239 aa)). Residues 1–704 (MSSAPRRPAS…SDFRDALDPQ (704 aa)) are Cytoplasmic-facing. Composition is skewed to basic and acidic residues over residues 39-49 (LRTLGVERFEE) and 58-75 (GGEE…EYHR). Composition is skewed to basic residues over residues 76–85 (QSSHHIHHPL) and 94–110 (RRRK…RRRP). Residue Ser113 is modified to Phosphoserine. Residues 120–133 (TIEEGEEDEDEVGE) are compositionally biased toward acidic residues. Ser145, Ser171, and Ser173 each carry phosphoserine. Positions 207–216 (TAGGDDGGAA) are enriched in gly residues. Ser240 carries the phosphoserine modification. Phosphothreonine is present on Thr254. Residue Lys271 is modified to N6-methyllysine. The segment at 287–315 (RKNAKGSTQAAREGREPGPTPRARPRAPH) is disordered. Phosphoserine is present on Ser440. Positions 446–467 (SLLGHHHAQGTESDPHVTEPLI) are disordered. The next 4 helical transmembrane spans lie at 705-728 (CLAA…GLLG), 734-771 (LIGV…LLVF), 791-813 (VWIG…SFLV), and 823-843 (IFAF…LIKI). The segment at 705–1234 (CLAAVIFIYF…DEYNEMPMPV (530 aa)) is membrane (anion exchange). The Extracellular portion of the chain corresponds to 844–893 (FQEHPLHGCSVSNDSEADSSSNNMTWAATTLAPDNSSASGQERPRGQPNT). Asn856, Asn866, and Asn878 each carry an N-linked (GlcNAc...) asparagine glycan. A helical membrane pass occupies residues 894-911 (ALLSLVLMAGTFFIAFFL). The Cytoplasmic portion of the chain corresponds to 912-926 (RKFKNSRFFPGRIRR). Transmembrane regions (helical) follow at residues 927-947 (VIGD…DYSI), 981-1003 (PFPV…LIFM), 1029-1050 (LLLI…LAAA), 1084-1129 (VTGL…IQFY), and 1156-1192 (MHLF…TVPL). Cys1166 is lipidated: S-palmitoyl cysteine.

This sequence belongs to the anion exchanger (TC 2.A.31) family. As to expression, expressed in the parotid and submandibular glands (at protein level). Expressed in the gastric mucosa (at protein level). Expressed in the choroid plexus epithelium (at protein level). Expressed in the liver and gallbladder.

The protein localises to the apical cell membrane. It is found in the basolateral cell membrane. It carries out the reaction hydrogencarbonate(in) + chloride(out) = hydrogencarbonate(out) + chloride(in). With respect to regulation, inhibited by 4,4'-diisothiocyanatostilbene-2,2'-disulfonic acid (DIDS). Its function is as follows. Sodium-independent anion exchanger which mediates the electroneutral exchange of chloride for bicarbonate ions across the cell membrane. Plays an important role in osteoclast differentiation and function. Regulates bone resorption and calpain-dependent actin cytoskeleton organization in osteoclasts via anion exchange-dependent control of pH. Essential for intracellular pH regulation in CD8(+) T-cells upon CD3 stimulation, modulating CD8(+) T-cell responses. The polypeptide is Anion exchange protein 2 (Slc4a2) (Rattus norvegicus (Rat)).